Reading from the N-terminus, the 171-residue chain is ATP synthase subunit b (171 aa).

A helical membrane pass occupies residues 4–24; the sequence is IAFFVICVGFPSLIFASASIQ.

The protein belongs to the ATPase B chain family. In terms of assembly, F-type ATPases have 2 components, F(1) - the catalytic core - and F(0) - the membrane proton channel. F(1) has five subunits: alpha(3), beta(3), gamma(1), delta(1), epsilon(1). F(0) has three main subunits: a(1), b(2) and c(10-14). The alpha and beta chains form an alternating ring which encloses part of the gamma chain. F(1) is attached to F(0) by a central stalk formed by the gamma and epsilon chains, while a peripheral stalk is formed by the delta and b chains.

It is found in the cell inner membrane. Functionally, f(1)F(0) ATP synthase produces ATP from ADP in the presence of a proton or sodium gradient. F-type ATPases consist of two structural domains, F(1) containing the extramembraneous catalytic core and F(0) containing the membrane proton channel, linked together by a central stalk and a peripheral stalk. During catalysis, ATP synthesis in the catalytic domain of F(1) is coupled via a rotary mechanism of the central stalk subunits to proton translocation. Its function is as follows. Component of the F(0) channel, it forms part of the peripheral stalk, linking F(1) to F(0). This chain is ATP synthase subunit b, found in Helicobacter hepaticus (strain ATCC 51449 / 3B1).